We begin with the raw amino-acid sequence, 465 residues long: Methylenetetrahydrofolate--tRNA-(uracil-5-)-methyltransferase TrmFO (465 aa).

FAD is bound at residue 10–15 (GAGLAG).

The protein belongs to the MnmG family. TrmFO subfamily. The cofactor is FAD.

The protein resides in the cytoplasm. It carries out the reaction uridine(54) in tRNA + (6R)-5,10-methylene-5,6,7,8-tetrahydrofolate + NADH + H(+) = 5-methyluridine(54) in tRNA + (6S)-5,6,7,8-tetrahydrofolate + NAD(+). It catalyses the reaction uridine(54) in tRNA + (6R)-5,10-methylene-5,6,7,8-tetrahydrofolate + NADPH + H(+) = 5-methyluridine(54) in tRNA + (6S)-5,6,7,8-tetrahydrofolate + NADP(+). Its function is as follows. Catalyzes the folate-dependent formation of 5-methyl-uridine at position 54 (M-5-U54) in all tRNAs. This Deinococcus radiodurans (strain ATCC 13939 / DSM 20539 / JCM 16871 / CCUG 27074 / LMG 4051 / NBRC 15346 / NCIMB 9279 / VKM B-1422 / R1) protein is Methylenetetrahydrofolate--tRNA-(uracil-5-)-methyltransferase TrmFO.